A 175-amino-acid chain; its full sequence is Flagellar assembly factor FliW (175 aa).

Belongs to the FliW family. Interacts with translational regulator CsrA and flagellin(s).

It is found in the cytoplasm. In terms of biological role, acts as an anti-CsrA protein, binds CsrA and prevents it from repressing translation of its target genes, one of which is flagellin. Binds to flagellin and participates in the assembly of the flagellum. The protein is Flagellar assembly factor FliW of Bdellovibrio bacteriovorus (strain ATCC 15356 / DSM 50701 / NCIMB 9529 / HD100).